A 3977-amino-acid chain; its full sequence is Hybrid PKS-NRPS synthetase gkaA (3977 aa).

A Ketosynthase family 3 (KS3) domain is found at 4-441 (EEPIAVIGSG…GTNAHVILEN (438 aa)). Residues C177, H316, and H361 each act as for beta-ketoacyl synthase activity in the active site. In terms of domain architecture, Malonyl-CoA:ACP transacylase (MAT) spans 551–867 (VFTGQGAQWP…TGVIHRGKND (317 aa)). An N-terminal hotdog fold region spans residues 937-1072 (NPLLGTRTTD…GRITVTLGES (136 aa)). A PKS/mFAS DH domain is found at 937–1241 (NPLLGTRTTD…VVAFSEATAD (305 aa)). The Proton acceptor; for dehydratase activity role is filled by H969. Residues 1087 to 1241 (LVSIPQDRFY…VVAFSEATAD (155 aa)) form a C-terminal hotdog fold region. Residue D1147 is the Proton donor; for dehydratase activity of the active site. The tract at residues 1286 to 1580 (YMKKTVEEFP…FSGIDSSTPE (295 aa)) is methyltransferase (cMeT) domain. The Ketoreductase (KR) domain occupies 2128 to 2301 (TYVLFGLTSD…AASILHIGAV (174 aa)). In terms of domain architecture, Carrier 1 spans 2409–2490 (SEVFEIISGA…QLLEYAIDNM (82 aa)). At S2450 the chain carries O-(pantetheine 4'-phosphoryl)serine. Positions 2497 to 2542 (HSNGEQGTVSDSGSTNIQLTPASTPSVPSVNLASDSTGSSQVGEDV) are disordered. The span at 2499–2538 (NGEQGTVSDSGSTNIQLTPASTPSVPSVNLASDSTGSSQV) shows a compositional bias: polar residues. Positions 2584–3018 (EKIIPMSPGQ…LKDISLFSKE (435 aa)) are condensation. The interval 3048-3437 (IAEHPDTISI…GALEILGRID (390 aa)) is adenylation. The Carrier 2 domain maps to 3552–3632 (FSLTPTEDKL…AMASLITPAS (81 aa)). At S3592 the chain carries O-(pantetheine 4'-phosphoryl)serine. The Thioester reductase (TE) domain maps to 3672 to 3890 (LTGATGFLGH…FVDLVSVQNV (219 aa)).

The protein in the C-terminal section; belongs to the NRP synthetase family. Requires pantetheine 4'-phosphate as cofactor.

The protein operates within mycotoxin biosynthesis. Functionally, hybrid PKS-NRPS synthetase; part of the gene cluster that mediates the biosynthesis of GKK1032, fungal natural products containing a macrocyclic para-cyclophane connected to a decahydrofluorene ring system that show potent antitumor activities. Within the pathway, the PKS-NRPS gkaA, with the help of the trans-enoyl reductase gkaC, synthesize the polyketide-tyrosyl acyl thioester product which can be reductively off-loaded by the terminal reductase (R) domain in gkaA. The PKS module of gkaA acts in combination with the trans-acting enoyl reductase gkaC to produce a methylated polyketide attached to the ACP domain. In parallel, the adenylation (A) domain of the NRPS module activated L-tyrosine, which is then transferred to the ACP domain. The condensation (C) domain subsequently links this group to the polyketide chain, forming an enzyme-bound amide. The alpha/beta hydrolase gkaG is then required to catalyze the subsequent Knoevenagel condensation that affords the 3-pyrrolin-2-one ring, whereas the three proteins gkaB, gkadX and gkaZ then function synergistically to form the cyclophane. This is Hybrid PKS-NRPS synthetase gkaA from Penicillium citrinum.